A 77-amino-acid polypeptide reads, in one-letter code: Putative defensin-like protein 30 (77 aa).

A signal peptide spans 1 to 26; that stretch reads MASSSKCAFLVFLCMIVLLAPSEVHA. 3 disulfides stabilise this stretch: cysteine 43–cysteine 63, cysteine 49–cysteine 72, and cysteine 53–cysteine 74.

Belongs to the DEFL family.

It is found in the secreted. This Arabidopsis thaliana (Mouse-ear cress) protein is Putative defensin-like protein 30.